Reading from the N-terminus, the 455-residue chain is Alpha-1,3/1,6-mannosyltransferase ALG2 (455 aa).

Residues Phe-73–Trp-95 form a helical membrane-spanning segment. Asn-138 carries N-linked (GlcNAc...) asparagine glycosylation. Residues Gly-434–Ile-453 form a helical membrane-spanning segment.

The protein belongs to the glycosyltransferase group 1 family. Glycosyltransferase 4 subfamily.

It localises to the endoplasmic reticulum membrane. It catalyses the reaction a beta-D-Man-(1-&gt;4)-beta-D-GlcNAc-(1-&gt;4)-alpha-D-GlcNAc-diphospho-di-trans,poly-cis-dolichol + GDP-alpha-D-mannose = an alpha-D-Man-(1-&gt;3)-beta-D-Man-(1-&gt;4)-beta-D-GlcNAc-(1-&gt;4)-alpha-D-GlcNAc-diphospho-di-trans,poly-cis-dolichol + GDP + H(+). It carries out the reaction an alpha-D-Man-(1-&gt;3)-beta-D-Man-(1-&gt;4)-beta-D-GlcNAc-(1-&gt;4)-alpha-D-GlcNAc-diphospho-di-trans,poly-cis-dolichol + GDP-alpha-D-mannose = an alpha-D-Man-(1-&gt;3)-[alpha-D-Man-(1-&gt;6)]-beta-D-Man-(1-&gt;4)-beta-D-GlcNAc-(1-&gt;4)-alpha-D-GlcNAc-diphospho-di-trans,poly-cis-dolichol + GDP + H(+). It participates in protein modification; protein glycosylation. Mannosylates Man(2)GlcNAc(2)-dolichol diphosphate and Man(1)GlcNAc(2)-dolichol diphosphate to form Man(3)GlcNAc(2)-dolichol diphosphate. This chain is Alpha-1,3/1,6-mannosyltransferase ALG2 (ALG2), found in Rhizomucor pusillus.